The primary structure comprises 89 residues: Small ribosomal subunit protein uS15 (89 aa).

This sequence belongs to the universal ribosomal protein uS15 family. Part of the 30S ribosomal subunit. Forms a bridge to the 50S subunit in the 70S ribosome, contacting the 23S rRNA.

One of the primary rRNA binding proteins, it binds directly to 16S rRNA where it helps nucleate assembly of the platform of the 30S subunit by binding and bridging several RNA helices of the 16S rRNA. Its function is as follows. Forms an intersubunit bridge (bridge B4) with the 23S rRNA of the 50S subunit in the ribosome. This is Small ribosomal subunit protein uS15 from Rhizorhabdus wittichii (strain DSM 6014 / CCUG 31198 / JCM 15750 / NBRC 105917 / EY 4224 / RW1) (Sphingomonas wittichii).